Consider the following 250-residue polypeptide: UPF0736 protein RBAM_011410 (250 aa).

Belongs to the UPF0736 family.

The protein is UPF0736 protein RBAM_011410 of Bacillus velezensis (strain DSM 23117 / BGSC 10A6 / LMG 26770 / FZB42) (Bacillus amyloliquefaciens subsp. plantarum).